Here is a 144-residue protein sequence, read N- to C-terminus: Large ribosomal subunit protein uL15 (144 aa).

Positions 1–57 (MKLNDLSPAPGSRREKHRPGRGIGSGLGKTGGRGHKGQTSRSGGSIAPGFEGGQQPL) are disordered. Over residues 21–31 (RGIGSGLGKTG) the composition is skewed to gly residues.

The protein belongs to the universal ribosomal protein uL15 family. In terms of assembly, part of the 50S ribosomal subunit.

In terms of biological role, binds to the 23S rRNA. This chain is Large ribosomal subunit protein uL15, found in Pseudomonas entomophila (strain L48).